Here is a 122-residue protein sequence, read N- to C-terminus: Putative iron-sulfur cluster insertion protein ErpA (122 aa).

Positions 50, 114, and 116 each coordinate iron-sulfur cluster.

It belongs to the HesB/IscA family. In terms of assembly, homodimer. Requires iron-sulfur cluster as cofactor.

Required for insertion of 4Fe-4S clusters. The polypeptide is Putative iron-sulfur cluster insertion protein ErpA (Cupriavidus metallidurans (strain ATCC 43123 / DSM 2839 / NBRC 102507 / CH34) (Ralstonia metallidurans)).